Consider the following 77-residue polypeptide: Adipokinetic prohormone type 3 (77 aa).

Positions 1–22 (MQVRAVLVLAVVALVAVATSRA) are cleaved as a signal peptide. The residue at position 23 (Gln23) is a Pyrrolidone carboxylic acid. Residue Trp30 is modified to Tryptophan amide.

Belongs to the AKH/HRTH/RPCH family.

The protein resides in the secreted. This hormone, released from cells in the corpora cardiaca, causes release of diglycerides from the fat body and stimulation of muscles to use these diglycerides as an energy source during energy-demanding processes. This is Adipokinetic prohormone type 3 from Locusta migratoria (Migratory locust).